Consider the following 86-residue polypeptide: Anti-adapter protein IraP (86 aa).

Residues 1-36 (MKNLIAELLFKLAQKEEESKELCAQVEALEIIVTAM) are a coiled coil.

Belongs to the IraP family. As to quaternary structure, interacts with RssB.

The protein localises to the cytoplasm. Inhibits RpoS proteolysis by regulating RssB activity, thereby increasing the stability of the sigma stress factor RpoS especially during phosphate starvation, but also in stationary phase and during nitrogen starvation. Its effect on RpoS stability is due to its interaction with RssB, which probably blocks the interaction of RssB with RpoS, and the consequent delivery of the RssB-RpoS complex to the ClpXP protein degradation pathway. The protein is Anti-adapter protein IraP of Escherichia coli (strain SE11).